The primary structure comprises 499 residues: Ammonium transporter MEP2 (499 aa).

At 1–31 the chain is on the extracellular side; the sequence is MSYNFTGTPTGEGTGGNSLTTDLNTQFDLAN. The N-linked (GlcNAc...) asparagine glycan is linked to Asn4. A helical membrane pass occupies residues 32 to 52; it reads MGWIGVASAGVWIMVPGIGLL. Topologically, residues 53 to 62 are cytoplasmic; sequence YSGLSRKKHA. The chain crosses the membrane as a helical span at residues 63–83; the sequence is LSLLWASMMASAVCIFQWFFW. The Extracellular segment spans residues 84-122; the sequence is GYSLAFSHNTRGNGFIGTLEFFGFRNVLGAPSSVSSLPD. The helical transmembrane segment at 123–143 threads the bilayer; that stretch reads ILFAVYQGMFAAVTGALMLGG. Residues 144 to 152 are Cytoplasmic-facing; it reads ACERARLFP. A helical membrane pass occupies residues 153–173; it reads MMVFLFLWMTIVYCPIACWVW. Residues 174–187 are Extracellular-facing; it reads NAEGWLVKLGSLDY. The chain crosses the membrane as a helical span at residues 188-208; the sequence is AGGLCVHLTSGHGGLVYALIL. The Cytoplasmic segment spans residues 209–230; it reads GKRNDPVTRKGMPKYKPHSVTS. Residues 231 to 251 traverse the membrane as a helical segment; sequence VVLGTVFLWFGWMFFNGGSAG. Topologically, residues 252-257 are extracellular; that stretch reads NATIRA. The chain crosses the membrane as a helical span at residues 258–278; the sequence is WYSIMSTNLAAACGGLTWMVI. The Cytoplasmic portion of the chain corresponds to 279 to 289; it reads DYFRCGRKWTT. A helical transmembrane segment spans residues 290–312; the sequence is VGLCSGIIAGLVGITPAAGFVPI. Topologically, residues 313 to 315 are extracellular; it reads WSA. A helical transmembrane segment spans residues 316–338; the sequence is VVIGVVTGAGCNLAVDLKSLLRI. Over 339–346 the chain is Cytoplasmic; the sequence is DDGLDCYS. The helical transmembrane segment at 347-367 threads the bilayer; sequence IHGVGGCIGSVLTGIFAADYV. The Extracellular segment spans residues 368–393; sequence NATAGSYISPIDGGWINHHYKQVGYQ. A helical membrane pass occupies residues 394-414; it reads LAGICAALAWTVTVTSILLLT. The Cytoplasmic segment spans residues 415–499; sequence MNAIPFLKLR…SSTKNTDHIV (85 aa). Residues 428–441 are enhancer domain; it reads DEEELGTDAAQIGE. A linker domain region spans residues 442–449; the sequence is FTYEESTA. Residues 450-485 are autoinhibitory domain; the sequence is YIPEPIRSKTSAQMPPPHENIDDKIVGNTDAEKNST. Residues 455–499 form a disordered region; sequence IRSKTSAQMPPPHENIDDKIVGNTDAEKNSTPSDASSTKNTDHIV. A Phosphoserine modification is found at Ser457. Basic and acidic residues predominate over residues 468–482; that stretch reads ENIDDKIVGNTDAEK. The segment covering 483–493 has biased composition (polar residues); the sequence is NSTPSDASSTK.

The protein belongs to the ammonia transporter channel (TC 1.A.11.2) family. Phosphorylated at Ser-457 by the TORC1 effector kinase NPR1 under nitrogen-limiting conditions which causes a conformational change in the C-terminal region (CTR) to form an open active conformation. Supplementation of nitrogen source leads to inactivation and instant Ser-457 dephosphorylation via plasma membrane PSR1 and PSR2 redundant phosphatases. Post-translationally, the residue Asn-4 of the protein's N-terminal tail is the only site that is glycosylated.

It localises to the cell membrane. In terms of biological role, transporter for ammonium (both charged and uncharged NH3 and NH4) to use as a nitrogen source. The affinity of MEP2 is about twenty times higher than that of MEP1. MEP3 has the lowest affinity. Under ammonium limitation acts as an ammonium sensor, generating a signal that leads to pseudohyphal (filamentous) growth. This chain is Ammonium transporter MEP2, found in Saccharomyces cerevisiae (strain ATCC 204508 / S288c) (Baker's yeast).